A 384-amino-acid polypeptide reads, in one-letter code: 4-hydroxy-3-methylbut-2-en-1-yl diphosphate synthase (flavodoxin) (384 aa).

Residues C272, C275, C307, and E314 each coordinate [4Fe-4S] cluster.

This sequence belongs to the IspG family. It depends on [4Fe-4S] cluster as a cofactor.

The catalysed reaction is (2E)-4-hydroxy-3-methylbut-2-enyl diphosphate + oxidized [flavodoxin] + H2O + 2 H(+) = 2-C-methyl-D-erythritol 2,4-cyclic diphosphate + reduced [flavodoxin]. Its pathway is isoprenoid biosynthesis; isopentenyl diphosphate biosynthesis via DXP pathway; isopentenyl diphosphate from 1-deoxy-D-xylulose 5-phosphate: step 5/6. Converts 2C-methyl-D-erythritol 2,4-cyclodiphosphate (ME-2,4cPP) into 1-hydroxy-2-methyl-2-(E)-butenyl 4-diphosphate. This chain is 4-hydroxy-3-methylbut-2-en-1-yl diphosphate synthase (flavodoxin), found in Rhodospirillum rubrum (strain ATCC 11170 / ATH 1.1.1 / DSM 467 / LMG 4362 / NCIMB 8255 / S1).